The following is a 118-amino-acid chain: Large ribosomal subunit protein bL20 (118 aa).

The protein belongs to the bacterial ribosomal protein bL20 family.

Its function is as follows. Binds directly to 23S ribosomal RNA and is necessary for the in vitro assembly process of the 50S ribosomal subunit. It is not involved in the protein synthesizing functions of that subunit. The sequence is that of Large ribosomal subunit protein bL20 from Desulforamulus reducens (strain ATCC BAA-1160 / DSM 100696 / MI-1) (Desulfotomaculum reducens).